We begin with the raw amino-acid sequence, 637 residues long: Nuclear receptor subfamily 2 group C member 1-B (637 aa).

Residues 149–224 (VELCVVCGDK…LGMKQDSVQC (76 aa)) constitute a DNA-binding region (nuclear receptor). NR C4-type zinc fingers lie at residues 152-172 (CVVC…CEGC) and 188-207 (CRGS…CQYC). An NR LBD domain is found at 383 to 624 (CVGSGSNLLP…SIIPYILRME (242 aa)).

The protein belongs to the nuclear hormone receptor family. NR2 subfamily.

It is found in the nucleus. In terms of biological role, orphan nuclear receptor. Binds the IR7 element in the promoter of its own gene in an autoregulatory negative feedback mechanism. Primarily repressor of a broad range of genes. Binds to hormone response elements (HREs) consisting of two 5'-AGGTCA-3' half site direct repeat consensus sequences. This chain is Nuclear receptor subfamily 2 group C member 1-B (nr2c1-b), found in Xenopus laevis (African clawed frog).